The following is a 506-amino-acid chain: Maturase K (506 aa).

The protein belongs to the intron maturase 2 family. MatK subfamily.

It is found in the plastid. The protein resides in the chloroplast. In terms of biological role, usually encoded in the trnK tRNA gene intron. Probably assists in splicing its own and other chloroplast group II introns. The polypeptide is Maturase K (Trifolium wormskioldii (Cows clover)).